Reading from the N-terminus, the 208-residue chain is MIGLVGRKVGMTRIFTEEGVSIPVTVIEIEANRVTQVKTLENDGYSAVQVTTGSKKASRVTKPEAGHFVKAGVEAGRGLWEFRTEGEEFTLGQEINVDIFADVKKVDVTGTSKGKGFQGGVKRWNFRTQDATHGNSLSHRVLGSIGQNQTPGRVFKGKKMAGHLGAERVTVQSLEVVRVDAERKLLLVKGAVPGATNSDVIVKPAVKA.

Gln149 is modified (N5-methylglutamine).

It belongs to the universal ribosomal protein uL3 family. Part of the 50S ribosomal subunit. Forms a cluster with proteins L14 and L19. In terms of processing, methylated by PrmB.

One of the primary rRNA binding proteins, it binds directly near the 3'-end of the 23S rRNA, where it nucleates assembly of the 50S subunit. This is Large ribosomal subunit protein uL3 from Mannheimia succiniciproducens (strain KCTC 0769BP / MBEL55E).